The sequence spans 1259 residues: Autism susceptibility gene 2 protein (1259 aa).

5 disordered regions span residues 1–87 (MDGP…EEDI), 108–285 (LKPQ…QDCC), 299–470 (CPQV…PPPP), 771–1027 (PNSM…MTVG), and 1119–1146 (REPHDYSHHHHHHHHPLSVDPRREHERG). Residues 8-17 (HGLRKKRRSR) show a composition bias toward basic residues. The segment covering 28 to 41 (GGLGAGAAGGGGAG) has biased composition (gly residues). Residues 108 to 118 (LKPQERVEKRQ) are compositionally biased toward basic and acidic residues. The segment covering 136-147 (HSKKSRLSHPHH) has biased composition (basic residues). Residues 148-158 (YSSDRENDRNL) show a composition bias toward basic and acidic residues. Residues 177–192 (PGQNSCRDSDSESASG) show a composition bias toward polar residues. The segment covering 276-285 (RSQEKSQDCC) has biased composition (basic and acidic residues). Residues 289–472 (IFEPVVLKDP…PTALPPPPPL (184 aa)) form an important for regulation of lamellipodia formation region. 2 stretches are compositionally biased toward pro residues: residues 331-345 (PPQPPPLSTQPPQGP) and 353-365 (APQPQVQRPPRPQ). The span at 386-410 (SLSQPLSAYNSSSLSLNSLSSSRSS) shows a compositional bias: low complexity. Residues 436–447 (PNHSPLHSFTPT) show a composition bias toward polar residues. Over residues 801–810 (PSFPTPPPWL) the composition is skewed to pro residues. Composition is skewed to basic and acidic residues over residues 813–850 (GELERSASAAAHDRDRDVDKRDSSVSKDDKERESVEKR), 876–935 (IRAH…EAKQ), and 960–993 (REAEPRKGEPAYENPKKSSEVKVKEERKEDHDLP). Residues 1125-1134 (SHHHHHHHHP) show a composition bias toward basic residues. S1198 and S1233 each carry phosphoserine. A disordered region spans residues 1217–1259 (LSAPPPLISTLGGRPVSPRRTTPLSAEIRERPPSHTLKDIEAR). Positions 1243–1259 (EIRERPPSHTLKDIEAR) are enriched in basic and acidic residues.

This sequence belongs to the AUTS2 family. Component of a PRC1-like complex that contains PCGF5, RNF2, CSNK2B, RYBP and AUTS2. Within this complex, interacts directly with PCGF5 and CSNK2B. Interacts with the histone acetyltransferase EP300/p300. Interacts (via Pro-rich region) with PREX1, DOCK1 and ELMO2. Strongly expressed in brain, skeletal muscle and kidney. Also expressed in placenta, lung and leukocytes.

The protein localises to the nucleus. Its subcellular location is the cytoplasm. It is found in the cytoskeleton. The protein resides in the cell projection. It localises to the growth cone. In terms of biological role, component of a Polycomb group (PcG) multiprotein PRC1-like complex, a complex class required to maintain the transcriptionally repressive state of many genes, including Hox genes, throughout development. PcG PRC1 complex acts via chromatin remodeling and modification of histones; it mediates monoubiquitination of histone H2A 'Lys-119', rendering chromatin heritably changed in its expressibility. The PRC1-like complex that contains PCGF5, RNF2, CSNK2B, RYBP and AUTS2 has decreased histone H2A ubiquitination activity, due to the phosphorylation of RNF2 by CSNK2B. As a consequence, the complex mediates transcriptional activation. In the cytoplasm, plays a role in axon and dendrite elongation and in neuronal migration during embryonic brain development. Promotes reorganization of the actin cytoskeleton, lamellipodia formation and neurite elongation via its interaction with RAC guanine nucleotide exchange factors, which then leads to the activation of RAC1. This Homo sapiens (Human) protein is Autism susceptibility gene 2 protein (AUTS2).